A 294-amino-acid polypeptide reads, in one-letter code: Mimecan (294 aa).

The N-terminal stretch at 1 to 19 is a signal peptide; the sequence is MKTLQAAFFLVAFVPLVKP. A glycan (N-linked (GlcNAc...) asparagine) is linked at asparagine 61. LRR repeat units lie at residues 108 to 127, 128 to 151, 152 to 175, 176 to 195, 196 to 221, 222 to 242, and 243 to 273; these read EAVP…FNKI, KRIA…GNMI, EEIE…ENRL, VKLP…QNRI, KSRG…HNAL, ESVP…HNNI, and TTIN…GNPI. Residues asparagine 241 and asparagine 254 are each glycosylated (N-linked (GlcNAc...) asparagine). Cysteines 251 and 284 form a disulfide.

It belongs to the small leucine-rich proteoglycan (SLRP) family. SLRP class III subfamily. Post-translationally, the composition of the N-linked chains or the substitution of the N-linked sites is different between embryonic and adult tissues. In terms of processing, contains keratan sulfate.

It localises to the secreted. It is found in the extracellular space. Its subcellular location is the extracellular matrix. Functionally, induces bone formation in conjunction with TGF-beta-1 or TGF-beta-2. The polypeptide is Mimecan (OGN) (Gallus gallus (Chicken)).